Consider the following 115-residue polypeptide: T cell receptor beta variable 7-7 (115 aa).

The N-terminal stretch at 1–21 is a signal peptide; it reads MGTSLLCWVVLGFLGTDHTGA. An Ig-like domain is found at 22-115; that stretch reads GVSQSPRYKV…SAMYRCASSL (94 aa). The cysteines at positions 42 and 111 are disulfide-linked.

As to quaternary structure, alpha-beta TR is a heterodimer composed of an alpha and beta chain; disulfide-linked. The alpha-beta TR is associated with the transmembrane signaling CD3 coreceptor proteins to form the TR-CD3 (TcR or TCR). The assembly of alpha-beta TR heterodimers with CD3 occurs in the endoplasmic reticulum where a single alpha-beta TR heterodimer associates with one CD3D-CD3E heterodimer, one CD3G-CD3E heterodimer and one CD247 homodimer forming a stable octameric structure. CD3D-CD3E and CD3G-CD3E heterodimers preferentially associate with TR alpha and TR beta chains, respectively. The association of the CD247 homodimer is the last step of TcR assembly in the endoplasmic reticulum and is required for transport to the cell surface.

The protein resides in the cell membrane. Its function is as follows. V region of the variable domain of T cell receptor (TR) beta chain that participates in the antigen recognition. Alpha-beta T cell receptors are antigen specific receptors which are essential to the immune response and are present on the cell surface of T lymphocytes. Recognize peptide-major histocompatibility (MH) (pMH) complexes that are displayed by antigen presenting cells (APC), a prerequisite for efficient T cell adaptive immunity against pathogens. Binding of alpha-beta TR to pMH complex initiates TR-CD3 clustering on the cell surface and intracellular activation of LCK that phosphorylates the ITAM motifs of CD3G, CD3D, CD3E and CD247 enabling the recruitment of ZAP70. In turn ZAP70 phosphorylates LAT, which recruits numerous signaling molecules to form the LAT signalosome. The LAT signalosome propagates signal branching to three major signaling pathways, the calcium, the mitogen-activated protein kinase (MAPK) kinase and the nuclear factor NF-kappa-B (NF-kB) pathways, leading to the mobilization of transcription factors that are critical for gene expression and essential for T cell growth and differentiation. The T cell repertoire is generated in the thymus, by V-(D)-J rearrangement. This repertoire is then shaped by intrathymic selection events to generate a peripheral T cell pool of self-MH restricted, non-autoaggressive T cells. Post-thymic interaction of alpha-beta TR with the pMH complexes shapes TR structural and functional avidity. This Homo sapiens (Human) protein is T cell receptor beta variable 7-7.